A 619-amino-acid chain; its full sequence is DNA mismatch repair protein MutL (619 aa).

It belongs to the DNA mismatch repair MutL/HexB family.

This protein is involved in the repair of mismatches in DNA. It is required for dam-dependent methyl-directed DNA mismatch repair. May act as a 'molecular matchmaker', a protein that promotes the formation of a stable complex between two or more DNA-binding proteins in an ATP-dependent manner without itself being part of a final effector complex. This Xylella fastidiosa (strain 9a5c) protein is DNA mismatch repair protein MutL.